We begin with the raw amino-acid sequence, 188 residues long: Holliday junction branch migration complex subunit RuvA (188 aa).

Residues 1–63 (MIEIIEGIYK…QEDMTIYGFD (63 aa)) are domain I. The tract at residues 64–142 (SKVKKETFEK…VVEVNEEMLE (79 aa)) is domain II. A region of interest (flexible linker) is located at residue Glu-142. Positions 142–188 (EAIEALVSLGYSKTQARNAVSKVLKESPNISNVSKIIKEALKILAKI) are domain III.

The protein belongs to the RuvA family. As to quaternary structure, homotetramer. Forms an RuvA(8)-RuvB(12)-Holliday junction (HJ) complex. HJ DNA is sandwiched between 2 RuvA tetramers; dsDNA enters through RuvA and exits via RuvB. An RuvB hexamer assembles on each DNA strand where it exits the tetramer. Each RuvB hexamer is contacted by two RuvA subunits (via domain III) on 2 adjacent RuvB subunits; this complex drives branch migration. In the full resolvosome a probable DNA-RuvA(4)-RuvB(12)-RuvC(2) complex forms which resolves the HJ.

It is found in the cytoplasm. In terms of biological role, the RuvA-RuvB-RuvC complex processes Holliday junction (HJ) DNA during genetic recombination and DNA repair, while the RuvA-RuvB complex plays an important role in the rescue of blocked DNA replication forks via replication fork reversal (RFR). RuvA specifically binds to HJ cruciform DNA, conferring on it an open structure. The RuvB hexamer acts as an ATP-dependent pump, pulling dsDNA into and through the RuvAB complex. HJ branch migration allows RuvC to scan DNA until it finds its consensus sequence, where it cleaves and resolves the cruciform DNA. The protein is Holliday junction branch migration complex subunit RuvA of Fervidobacterium nodosum (strain ATCC 35602 / DSM 5306 / Rt17-B1).